We begin with the raw amino-acid sequence, 348 residues long: D-alanine--D-alanine ligase (348 aa).

The 206-residue stretch at 136 to 341 (KYLLQTVGIP…YSDLIEELIQ (206 aa)) folds into the ATP-grasp domain. 169–224 (EGSLIYPVFVKPANMGSSVGISKVENREELQEALEEAFRYDARAIVEQGIEAREIE) lines the ATP pocket. Aspartate 295, glutamate 308, and asparagine 310 together coordinate Mg(2+).

It belongs to the D-alanine--D-alanine ligase family. It depends on Mg(2+) as a cofactor. The cofactor is Mn(2+).

The protein resides in the cytoplasm. It catalyses the reaction 2 D-alanine + ATP = D-alanyl-D-alanine + ADP + phosphate + H(+). It participates in cell wall biogenesis; peptidoglycan biosynthesis. Functionally, cell wall formation. The protein is D-alanine--D-alanine ligase (ddl) of Enterococcus faecalis (strain ATCC 700802 / V583).